Reading from the N-terminus, the 485-residue chain is Ribulose bisphosphate carboxylase large chain (485 aa).

Asn-124 and Thr-174 together coordinate substrate. The active-site Proton acceptor is the Lys-176. Residue Lys-178 coordinates substrate. The Mg(2+) site is built by Lys-202, Asp-204, and Glu-205. N6-carboxylysine is present on Lys-202. Catalysis depends on His-294, which acts as the Proton acceptor. Substrate contacts are provided by Arg-295, His-327, and Ser-379.

Belongs to the RuBisCO large chain family. Type I subfamily. Heterohexadecamer of 8 large chains and 8 small chains. Mg(2+) is required as a cofactor.

It carries out the reaction 2 (2R)-3-phosphoglycerate + 2 H(+) = D-ribulose 1,5-bisphosphate + CO2 + H2O. The enzyme catalyses D-ribulose 1,5-bisphosphate + O2 = 2-phosphoglycolate + (2R)-3-phosphoglycerate + 2 H(+). RuBisCO catalyzes two reactions: the carboxylation of D-ribulose 1,5-bisphosphate, the primary event in carbon dioxide fixation, as well as the oxidative fragmentation of the pentose substrate in the photorespiration process. Both reactions occur simultaneously and in competition at the same active site. The chain is Ribulose bisphosphate carboxylase large chain from Rhodopseudomonas palustris (strain BisB18).